The sequence spans 493 residues: Signal recognition particle subunit SRP54 3 (493 aa).

The G-domain stretch occupies residues 1-294 (MVLADVGGSI…NVEPFVARLL (294 aa)). Residues 107–114 (GLQGSGKT), 189–193 (DTSGR), and 247–250 (TKLD) each bind GTP. An M-domain region spans residues 295–493 (GRGDLPGLID…KMLAGMRGGA (199 aa)).

The protein belongs to the GTP-binding SRP family. SRP54 subfamily. In terms of assembly, component of a signal recognition particle (SRP) complex that consists of a 7SL RNA molecule of 300 nucleotides and six protein subunits: SRP72, SRP68, SRP54, SRP19, SRP14 and SRP9.

Its subcellular location is the cytoplasm. It is found in the endoplasmic reticulum. It carries out the reaction GTP + H2O = GDP + phosphate + H(+). In terms of biological role, component of the signal recognition particle (SRP) complex, a ribonucleoprotein complex that mediates the cotranslational targeting of secretory and membrane proteins to the endoplasmic reticulum (ER). As part of the SRP complex, associates with the SRP receptor (SR) component SRPRA to target secretory proteins to the endoplasmic reticulum membrane. Binds to the signal sequence of presecretory proteins when they emerge from the ribosomes. Displays basal GTPase activity, and stimulates reciprocal GTPase activation of the SR subunit SRPRA. Forms a guanosine 5'-triphosphate (GTP)-dependent complex with the SR subunit SRPRA. SR compaction and GTPase mediated rearrangement of SR drive SRP-mediated cotranslational protein translocation into the ER. Requires the presence of SRP9/SRP14 and/or SRP19 to stably interact with RNA. The sequence is that of Signal recognition particle subunit SRP54 3 (SRP54-3) from Hordeum vulgare (Barley).